Reading from the N-terminus, the 100-residue chain is Integration host factor subunit beta (100 aa).

A disordered region spans residues 81–100 (KPGKELRDRVNEDEHEEAHT). Over residues 82-100 (PGKELRDRVNEDEHEEAHT) the composition is skewed to basic and acidic residues.

It belongs to the bacterial histone-like protein family. Heterodimer of an alpha and a beta chain.

This protein is one of the two subunits of integration host factor, a specific DNA-binding protein that functions in genetic recombination as well as in transcriptional and translational control. The protein is Integration host factor subunit beta (ihfB) of Pseudomonas putida (Arthrobacter siderocapsulatus).